The chain runs to 559 residues: Probable D-2-hydroxyglutarate dehydrogenase, mitochondrial (559 aa).

The transit peptide at 1–80 directs the protein to the mitochondrion; it reads MARRAAAGLL…MNFEVQKRSF (80 aa). An FAD-binding PCMH-type domain is found at 131 to 310; sequence YKGSSQLLLL…TKIAILTPAK (180 aa).

It belongs to the FAD-binding oxidoreductase/transferase type 4 family. As to quaternary structure, homodimer. FAD serves as cofactor.

It localises to the mitochondrion. The catalysed reaction is (R)-2-hydroxyglutarate + A = 2-oxoglutarate + AH2. Functionally, catalyzes the oxidation of D-2-hydroxyglutarate to alpha-ketoglutarate. The sequence is that of Probable D-2-hydroxyglutarate dehydrogenase, mitochondrial (D2HGDH) from Oryza sativa subsp. japonica (Rice).